A 339-amino-acid polypeptide reads, in one-letter code: DNA-directed RNA polymerase subunit alpha (339 aa).

The alpha N-terminal domain (alpha-NTD) stretch occupies residues 1–233 (MVREEVAGST…DLFLPFLHAE (233 aa)). The segment at 264 to 339 (KKGIPLNCIF…IDLLKNKLSF (76 aa)) is alpha C-terminal domain (alpha-CTD).

It belongs to the RNA polymerase alpha chain family. In terms of assembly, in plastids the minimal PEP RNA polymerase catalytic core is composed of four subunits: alpha, beta, beta', and beta''. When a (nuclear-encoded) sigma factor is associated with the core the holoenzyme is formed, which can initiate transcription.

The protein resides in the plastid. It is found in the chloroplast. The enzyme catalyses RNA(n) + a ribonucleoside 5'-triphosphate = RNA(n+1) + diphosphate. In terms of biological role, DNA-dependent RNA polymerase catalyzes the transcription of DNA into RNA using the four ribonucleoside triphosphates as substrates. The sequence is that of DNA-directed RNA polymerase subunit alpha from Eremopyrum distans.